The sequence spans 511 residues: 2'-5'-oligoadenylate synthase-like protein 1 (511 aa).

Ubiquitin-like domains lie at 350–429 (IQVT…ISPE) and 430–506 (IQVF…EGAA).

The protein belongs to the 2-5A synthase family. In terms of assembly, specifically interacts with the ligand binding domain of the thyroid receptor (TR). TRIP14 does not require the presence of thyroid hormone for its interaction. Binds MBD1.

The protein resides in the nucleus. It localises to the nucleolus. It is found in the cytoplasm. In terms of biological role, does not have 2'-5'-OAS activity, but can bind double-stranded RNA. Displays antiviral activity via an alternative antiviral pathway independent of RNase L. This Mus musculus (Mouse) protein is 2'-5'-oligoadenylate synthase-like protein 1 (Oasl1).